A 938-amino-acid chain; its full sequence is Isoleucine--tRNA ligase (938 aa).

The short motif at 58 to 68 (PYANGNIHIGH) is the 'HIGH' region element. Residue E562 coordinates L-isoleucyl-5'-AMP. The short motif at 603–607 (KMSKS) is the 'KMSKS' region element. K606 contacts ATP. Zn(2+) is bound by residues C901, C904, C921, and C924.

This sequence belongs to the class-I aminoacyl-tRNA synthetase family. IleS type 1 subfamily. In terms of assembly, monomer. The cofactor is Zn(2+).

The protein resides in the cytoplasm. It carries out the reaction tRNA(Ile) + L-isoleucine + ATP = L-isoleucyl-tRNA(Ile) + AMP + diphosphate. In terms of biological role, catalyzes the attachment of isoleucine to tRNA(Ile). As IleRS can inadvertently accommodate and process structurally similar amino acids such as valine, to avoid such errors it has two additional distinct tRNA(Ile)-dependent editing activities. One activity is designated as 'pretransfer' editing and involves the hydrolysis of activated Val-AMP. The other activity is designated 'posttransfer' editing and involves deacylation of mischarged Val-tRNA(Ile). The sequence is that of Isoleucine--tRNA ligase from Actinobacillus pleuropneumoniae serotype 5b (strain L20).